The chain runs to 89 residues: UPF0237 protein lin0537 (89 aa).

The ACT domain occupies 4–78 (VLTVIGKDNV…EELQVKIHIQ (75 aa)).

It belongs to the UPF0237 family.

This chain is UPF0237 protein lin0537, found in Listeria innocua serovar 6a (strain ATCC BAA-680 / CLIP 11262).